The chain runs to 449 residues: Elongation factor 1-alpha (449 aa).

Residues 5–234 (KQHVSIVVIG…DNCDPPKRPV (230 aa)) form the tr-type G domain. Residues 14–21 (GHVDSGKS) form a G1 region. 14 to 21 (GHVDSGKS) provides a ligand contact to GTP. K55 is modified (N6,N6-dimethyllysine). The G2 stretch occupies residues 70–74 (GITID). The residue at position 79 (K79) is an N6,N6,N6-trimethyllysine. Positions 91–94 (DAPG) are G3. GTP-binding positions include 91-95 (DAPGH) and 153-156 (NKMD). A G4 region spans residues 153–156 (NKMD). K187 bears the N6,N6,N6-trimethyllysine mark. The interval 194 to 196 (SGW) is G5. At K265 the chain carries N6-methyllysine. An N6,N6,N6-trimethyllysine mark is found at K310 and K400.

This sequence belongs to the TRAFAC class translation factor GTPase superfamily. Classic translation factor GTPase family. EF-Tu/EF-1A subfamily.

It is found in the cytoplasm. Functionally, this protein promotes the GTP-dependent binding of aminoacyl-tRNA to the A-site of ribosomes during protein biosynthesis. The protein is Elongation factor 1-alpha of Pyropia yezoensis (Susabi-nori).